We begin with the raw amino-acid sequence, 403 residues long: Aromatic-L-amino-acid decarboxylase (403 aa).

Residue Thr8 coordinates substrate. Pyridoxal 5'-phosphate is bound by residues Ala74 and Ser75. His118 contributes to the substrate binding site. Residue His118 is part of the active site. Positions 197 and 226 each coordinate pyridoxal 5'-phosphate. The residue at position 229 (Lys229) is an N6-(pyridoxal phosphate)lysine. Positions 250-276 (NAFNVDPLYLKHDMQGSAPDYRHWQIP) are disordered.

The protein belongs to the group II decarboxylase family. As to quaternary structure, homodimer. Requires pyridoxal 5'-phosphate as cofactor.

The enzyme catalyses L-dopa + H(+) = dopamine + CO2. It carries out the reaction 5-hydroxy-L-tryptophan + H(+) = serotonin + CO2. In terms of biological role, catalyzes the decarboxylation of L-3,4-dihydroxyphenylalanine (L-DOPA) to dopamine and L-5-hydroxytryptophan (5-HTP) to serotonin. Catalyzes the formation of serotonin more efficiently than dopamine. Displays no activity to tyrosine. Variation in the synthesis of bioamines may be a factor contributing to natural variation in life span. In Drosophila lebanonensis (Fruit fly), this protein is Aromatic-L-amino-acid decarboxylase (Ddc).